A 300-amino-acid polypeptide reads, in one-letter code: uncharacterized protein (300 aa).

2 disordered regions span residues 167–186 (DVFL…HHEH) and 224–244 (ADGS…DASH). Residues 224-236 (ADGSSLETSSMSS) show a composition bias toward polar residues.

This is an uncharacterized protein from Rattus norvegicus (Rat).